The chain runs to 538 residues: MAKQIEFNDAARKSLEAGVDRLANAVKVTLGPRGRNVVLDKKWGAPTITNDGVTIAREIELDDPYENLGAQLAKEVATKTNDVAGDGTTTATVLAQALVKEGLRNVAAGAAPSALKHGIEVSVEAIAGRLLENTREVAGGQVASVAAISAQSPEIGELLAEAFDKVGKDGVITIEESSSMVTELVLTEGMQFDKGYLSPHFVTDHERQEAVLEDALILINQGKISSIQEFLPLLEKTLKASKPLFIIAEDVDGEALSTLIVNRLRGNLNVVAVKAPGFGDRRKAMLQDIAILTGAQVVSPEIGLSLDQVGLEVLGTARRITVTKDNTTIVDGAGTDADVADRVSQLRAELERTDSDWDKEKLQERLAKLAGGIGVIKVGAATEVELKEKKHRIEDAVSSTRAALEEGIVAGGGSALVQAAKALDENAEVKALEGDAVTAVNLVRRAVAQPLRWIAENAGHDGYLVISKVAELPDGHGFNAATGEYGDLIAQGVIDPVKVTRSALRNAASIAALVLTTEALVVEKPEEDESDSHAGHQH.

Residues 29-32 (TLGP), 86-90 (DGTTT), Gly412, 479-481 (NAA), and Asp495 each bind ATP.

This sequence belongs to the chaperonin (HSP60) family. In terms of assembly, forms a cylinder of 14 subunits composed of two heptameric rings stacked back-to-back. Interacts with the co-chaperonin GroES.

It localises to the cytoplasm. It carries out the reaction ATP + H2O + a folded polypeptide = ADP + phosphate + an unfolded polypeptide.. In terms of biological role, together with its co-chaperonin GroES, plays an essential role in assisting protein folding. The GroEL-GroES system forms a nano-cage that allows encapsulation of the non-native substrate proteins and provides a physical environment optimized to promote and accelerate protein folding. This chain is Chaperonin GroEL 2, found in Renibacterium salmoninarum (strain ATCC 33209 / DSM 20767 / JCM 11484 / NBRC 15589 / NCIMB 2235).